The chain runs to 161 residues: Pleiotrophin-A (161 aa).

The first 23 residues, 1 to 23 (MRHQHGLFMLALLAFLFVITVLG), serve as a signal peptide directing secretion. 5 cysteine pairs are disulfide-bonded: C41-C70, C49-C79, C56-C83, C93-C125, and C103-C135. Chondroitin sulfate binding regions lie at residues 86–93 (KKQFGAEC) and 117–125 (KRALHNAEC). Residues 136 to 161 (GKVTKPKLQESKKKKKEGKNKEKLLD) form a disordered region. Positions 141–161 (PKLQESKKKKKEGKNKEKLLD) are chondroitin sulfate A binding.

The protein belongs to the pleiotrophin family. As to expression, expressed in high levels in brain and eye. Lower levels in bone. In the tailbud embryo stage, it is expressed exclusively in the central nervous system, especially in the hind region of the brain.

It localises to the secreted. Functionally, secreted growth factor that mediates its signal through cell-surface proteoglycan and non-proteoglycan receptors. Binds cell-surface proteoglycan receptor via their chondroitin sulfate (CS) groups. Thereby regulates many processes like cell proliferation, cell survival, cell growth, cell differentiation and cell migration. Has antibacterial activity against both Gram-positive and Gram-negative bacteria. The sequence is that of Pleiotrophin-A (ptn-a) from Xenopus laevis (African clawed frog).